Consider the following 467-residue polypeptide: Nuclear distribution protein PAC1 (467 aa).

Positions 62–96 (GSIIRLQRAITKLEQKCDALQQELDDKTKQLETIV) form a coiled coil. 7 WD repeats span residues 121-160 (QNES…IPLA), 164-212 (AHSK…GELK), 219-262 (AHDS…QSFS), 264-302 (HSEW…SVGT), 325-365 (PYRD…LKPN), 385-424 (GHTS…KTWS), and 426-466 (IHNN…VKII).

Belongs to the WD repeat LIS1/nudF family. Self-associates. Interacts with NDL1 and dynein.

It localises to the cytoplasm. It is found in the cytoskeleton. The protein localises to the spindle pole. Functionally, positively regulates the activity of the minus-end directed microtubule motor protein dynein. Plays a central role in positioning the mitotic spindle at the bud neck during cell division. Targets cytoplasmic dynein to microtubule plus ends, thereby promoting dynein-mediated microtubule sliding along the bud cortex and consequently the movement of the mitotic spindle to the bud neck. The sequence is that of Nuclear distribution protein PAC1 from Candida glabrata (strain ATCC 2001 / BCRC 20586 / JCM 3761 / NBRC 0622 / NRRL Y-65 / CBS 138) (Yeast).